Consider the following 243-residue polypeptide: Ribonuclease 3 (243 aa).

The RNase III domain maps to 10–146 (INRFRKRFDT…FIGALYLDQG (137 aa)). Glutamate 59 is a binding site for Mg(2+). Aspartate 63 is a catalytic residue. Residues aspartate 132 and glutamate 135 each coordinate Mg(2+). The active site involves glutamate 135. One can recognise a DRBM domain in the interval 172 to 241 (DFKTQFQEYV…AESAYKQLKQ (70 aa)). Positions 219–231 (GKGKTKKESEQRA) are enriched in basic and acidic residues. The tract at residues 219–243 (GKGKTKKESEQRAAESAYKQLKQIK) is disordered.

It belongs to the ribonuclease III family. As to quaternary structure, homodimer. It depends on Mg(2+) as a cofactor.

Its subcellular location is the cytoplasm. It catalyses the reaction Endonucleolytic cleavage to 5'-phosphomonoester.. Its function is as follows. Digests double-stranded RNA. Involved in the processing of primary rRNA transcript to yield the immediate precursors to the large and small rRNAs (23S and 16S). Processes some mRNAs, and tRNAs when they are encoded in the rRNA operon. Processes pre-crRNA and tracrRNA of type II CRISPR loci if present in the organism. In Staphylococcus aureus (strain bovine RF122 / ET3-1), this protein is Ribonuclease 3.